Consider the following 864-residue polypeptide: Probable M1 family aminopeptidase 2 (864 aa).

Substrate-binding positions include E149 and 289 to 293 (GAMEN). H325 contributes to the Zn(2+) binding site. The Proton acceptor role is filled by E326. The Zn(2+) site is built by H329 and E348.

This sequence belongs to the peptidase M1 family. Zn(2+) is required as a cofactor.

In Encephalitozoon cuniculi (strain GB-M1) (Microsporidian parasite), this protein is Probable M1 family aminopeptidase 2.